The following is a 144-amino-acid chain: Large ribosomal subunit protein uL16 (144 aa).

The span at 1–16 (MLVPKRVKHRKVQRGK) shows a compositional bias: basic residues. The interval 1–20 (MLVPKRVKHRKVQRGKMRGE) is disordered.

This sequence belongs to the universal ribosomal protein uL16 family. As to quaternary structure, part of the 50S ribosomal subunit.

In terms of biological role, binds 23S rRNA and is also seen to make contacts with the A and possibly P site tRNAs. This is Large ribosomal subunit protein uL16 from Limosilactobacillus fermentum (strain NBRC 3956 / LMG 18251) (Lactobacillus fermentum).